A 1196-amino-acid polypeptide reads, in one-letter code: MAPVYEGMASHVQVFSPHTLQSSAFCSVKKLKVEPSSNWDMTGYGSHSKVYSQSKNIPPSQPASTTVSTSLPIPNPSLPYEQTIIFPGSTGHIVVTSASSTSVTGQVLGGPHNLMRRSTVSLLDTYQKCGLKRKSEEIENTSSVQIIEEHPPMIQNNASGATVATATTSTATSKNSGSNSEGDYQLVQHEVLCSMTNTYEVLEFLGRGTFGQVVKCWKRGTNEIVAIKILKNHPSYARQGQIEVSILARLSTESADDYNFVRAYECFQHKNHTCLVFEMLEQNLYDFLKQNKFSPLPLKYIRPVLQQVATALMKLKSLGLIHADLKPENIMLVDPSRQPYRVKVIDFGSASHVSKAVCSTYLQSRYYRAPEIILGLPFCEAIDMWSLGCVIAELFLGWPLYPGASEYDQIRYISQTQGLPAEYLLSAGTKTTRFFNRDTDSPYPLWRLKTPDDHEAETGIKSKEARKYIFNCLDDMAQVNMTTDLEGSDMLVEKADRREFIDLLKKMLTIDADKRVTPIETLNHPFVTMTHLLDFPHSAHVKSCFQNMEICKRRVNMYDTVNQSKTPFITHVAPSTSTNLTMTFNNQLTTVHNQAPTTSSATLSLANPEVSILNYQSALYQPSAASMAAVAPRSMPLQTGTAQICARPDPFQQALIVCPPGFQGLQASPSKHAGYSVRMENAVPIVTQAPGAQPLQIQPGLLAQQAWPGGAQQILLPPAWQQLTGVATHTSVQHAAVIPETMAGTQQLADWRNTHAHGSHYNPIMQQPALLTGHVTLPAAQPLNVGVAHVMRQQPTSTTSSRKSKQHQSSVRNVSTCEVTSSQAISSPQRSKRVKENTPPRCAMVHSSPACSTSVTCGWGDVASSTTRERQRQTIVIPDTPSPTVSVITISSDTDEEEEQKHAPTSTVSKQRKNVISCVTVHDSPYSDSSSNTSPYSVQQRTGHNGTNTLDTKGGLENHCTGNPRTIIVPPLKTQASEVLVECDSLGPAISASHHSSSFKSKSSSTVTSTSGHSSGSSSGAIAYRQQRPGPHFQQQQPLNLSQAQQHMAADRTGSHRRQQAYITPTMAQAPYTFPHNSPSHGTVHPHLAAAAHLPTQPHLYTYTAPTALGSTGTVAHLVASQGSARHTVQHTAYPASIVHQVPVSMGPRVLPSPTIHPSQYPAQFAHQTYISASPASTVYTGYPLSPAKVNQYPYI.

A Phosphoserine modification is found at S16. K32 participates in a covalent cross-link: Glycyl lysine isopeptide (Lys-Gly) (interchain with G-Cter in SUMO); alternate. A Glycyl lysine isopeptide (Lys-Gly) (interchain with G-Cter in SUMO2); alternate cross-link involves residue K32. Residues 50 to 69 (VYSQSKNIPPSQPASTTVST) are disordered. The segment at 97–230 (SASSTSVTGQ…TNEIVAIKIL (134 aa)) is transcriptional corepression. 2 positions are modified to phosphoserine: S118 and S135. A Phosphothreonine modification is found at T141. Residues 189-520 (HEVLCSMTNT…DADKRVTPIE (332 aa)) are interaction with DAXX. The Protein kinase domain occupies 199–527 (YEVLEFLGRG…PIETLNHPFV (329 aa)). ATP contacts are provided by residues 205 to 213 (LGRGTFGQV) and K228. Phosphothreonine occurs at positions 252 and 273. Residue D324 is the Proton acceptor of the active site. Y361 bears the Phosphotyrosine; by autocatalysis mark. Phosphoserine is present on S441. Phosphothreonine occurs at positions 482, 517, and 566. Positions 539–844 (AHVKSCFQNM…KENTPPRCAM (306 aa)) are interaction with SKI and SMAD1. Positions 600 to 800 (SATLSLANPE…MRQQPTSTTS (201 aa)) are interaction with DAZAP2. Residues S634 and S668 each carry the phosphoserine modification. T687 is subject to Phosphothreonine. Residues 752–897 (RNTHAHGSHY…ITISSDTDEE (146 aa)) are interaction with POU4F1. Residues 774–876 (HVTLPAAQPL…TRERQRQTIV (103 aa)) form an interaction with CTBP1 region. The segment at 787–897 (VAHVMRQQPT…ITISSDTDEE (111 aa)) is interaction with HMGA1. Disordered stretches follow at residues 792–847 (RQQP…MVHS) and 891–963 (SSDT…CTGN). A compositionally biased stretch (polar residues) spans 793–829 (QQPTSTTSSRKSKQHQSSVRNVSTCEVTSSQAISSPQ). Positions 802-805 (RKSK) match the Nuclear localization signal 1 (NLS1) motif. 2 positions are modified to phosphoserine: S815 and S827. Positions 832 to 835 (KRVK) match the Nuclear localization signal 2 (NLS2) motif. The interaction with TP53 and TP73 stretch occupies residues 839-934 (PPRCAMVHSS…PYSDSSSNTS (96 aa)). The segment at 873–907 (QTIVIPDTPSPTVSVITISSDTDEEEEQKHAPTST) is interaction with UBE2I. The segment at 873–980 (QTIVIPDTPS…PLKTQASEVL (108 aa)) is localization to nuclear speckles. The interval 873 to 980 (QTIVIPDTPS…PLKTQASEVL (108 aa)) is required for localization to nuclear speckles. The SUMO interaction motifs (SIM); required for nuclear localization and kinase activity stretch occupies residues 884 to 908 (TVSVITISSDTDEEEEQKHAPTSTV). Low complexity predominate over residues 923 to 937 (DSPYSDSSSNTSPYS). S934 carries the phosphoserine modification. Residues 935-1050 (PYSVQQRTGH…LSQAQQHMAA (116 aa)) are interaction with AXIN1. Residues 938–951 (VQQRTGHNGTNTLD) are compositionally biased toward polar residues. Residues K953 and K973 each participate in a glycyl lysine isopeptide (Lys-Gly) (interchain with G-Cter in SUMO2) cross-link. Residues 984 to 1196 (DSLGPAISAS…PAKVNQYPYI (213 aa)) are autoinhibitory domain (AID). Phosphoserine occurs at positions 991, 993, 1042, 1153, and 1186. Low complexity predominate over residues 991–1046 (SASHHSSSFKSKSSSTVTSTSGHSSGSSSGAIAYRQQRPGPHFQQQQPLNLSQAQQ). Positions 991 to 1058 (SASHHSSSFK…AADRTGSHRR (68 aa)) are disordered. A Glycyl lysine isopeptide (Lys-Gly) (interchain with G-Cter in SUMO) cross-link involves residue K1189.

Belongs to the protein kinase superfamily. CMGC Ser/Thr protein kinase family. HIPK subfamily. Interacts with CREB1, SIAH1, WSB1, CBX4, TRADD, p53/TP53, TP73, TP63, CREBBP, DAXX, P53DINP1, SKI, SMAD1, SMAD2 and SMAD3, but not SMAD4. Interacts with SP100; positively regulates TP53-dependent transcription. Interacts with ATF1, PML, RUNX1, EP300, NKX1-2, NKX2-5, UBE2I, HMGA1, CTBP1, AXIN1, NLK, MYB, POU4F1, POU4F2, POU4F3, UBE2I, UBL1 and ZBTB4. Probably part of a complex consisting of p53/TP53, HIPK2 and AXIN1. Interacts with DAZAP2; the interaction results in phosphorylation of DAZAP2 which causes localization of DAZAP2 to the nucleus, reduces interaction of DAZAP2 with HIPK2 and prevents DAZAP2-dependent degradation of HIPK2. Interacts with SIAH1; the interaction is promoted by DAZAP2 and results in SIAH1-mediated ubiquitination and subsequent proteasomal degradation of HIPK2. As to quaternary structure, interacts with SPN/CD43 cytoplasmic tail. Post-translationally, sumoylated. When conjugated it is directed to nuclear speckles. Desumoylated by SENP1. Sumoylation on Lys-32 is promoted by the E3 SUMO-protein ligase CBX4. Autophosphorylation at Tyr-361 in the activation loop activates the kinase and promotes nuclear localization. In terms of processing, ubiquitinated by FBXO3, WSB1 and SIAH1, leading to rapid proteasome-dependent degradation. The degradation mediated by FBXO3, but not ubiquitination, is prevented in the presence of PML. The degradation mediated by WSB1 and SIAH1 is reversibly reduced upon DNA damage. Post-translationally, cleaved at Asp-923 and Asp-984 by CASP6 in a p53/TP53-dependent manner. The cleaved form lacks the autoinhibitory C-terminal domain (AID), resulting in a hyperactive kinase, which potentiates p53/TP53 Ser-46 phosphorylation and subsequent activation of the cell death machinery. Ubiquitous. Abundant in muscle, heart, small intestine, stomach, kidney and brain; and low in testis, skin and lung.

It localises to the nucleus. It is found in the PML body. The protein resides in the cytoplasm. It catalyses the reaction L-seryl-[protein] + ATP = O-phospho-L-seryl-[protein] + ADP + H(+). The catalysed reaction is L-threonyl-[protein] + ATP = O-phospho-L-threonyl-[protein] + ADP + H(+). Functionally, serine/threonine-protein kinase involved in transcription regulation, p53/TP53-mediated cellular apoptosis and regulation of the cell cycle. Acts as a corepressor of several transcription factors, including SMAD1 and POU4F1/Brn3a and probably NK homeodomain transcription factors. Phosphorylates PDX1, ATF1, PML, p53/TP53, CREB1, CTBP1, CBX4, RUNX1, EP300, CTNNB1, HMGA1, ZBTB4 and DAZAP2. Inhibits cell growth and promotes apoptosis through the activation of p53/TP53 both at the transcription level and at the protein level (by phosphorylation and indirect acetylation). The phosphorylation of p53/TP53 may be mediated by a p53/TP53-HIPK2-AXIN1 complex. Involved in the response to hypoxia by acting as a transcriptional co-suppressor of HIF1A. Mediates transcriptional activation of TP73. In response to TGFB, cooperates with DAXX to activate JNK. Negative regulator through phosphorylation and subsequent proteasomal degradation of CTNNB1 and the antiapoptotic factor CTBP1. In the Wnt/beta-catenin signaling pathway acts as an intermediate kinase between MAP3K7/TAK1 and NLK to promote the proteasomal degradation of MYB. Phosphorylates CBX4 upon DNA damage and promotes its E3 SUMO-protein ligase activity. Activates CREB1 and ATF1 transcription factors by phosphorylation in response to genotoxic stress. In response to DNA damage, stabilizes PML by phosphorylation. PML, HIPK2 and FBXO3 may act synergically to activate p53/TP53-dependent transactivation. Promotes angiogenesis, and is involved in erythroid differentiation, especially during fetal liver erythropoiesis. Phosphorylation of RUNX1 and EP300 stimulates EP300 transcription regulation activity. Triggers ZBTB4 protein degradation in response to DNA damage. In response to DNA damage, phosphorylates DAZAP2 which localizes DAZAP2 to the nucleus, reduces interaction of DAZAP2 with HIPK2 and prevents DAZAP2-dependent ubiquitination of HIPK2 by E3 ubiquitin-protein ligase SIAH1 and subsequent proteasomal degradation. Modulates HMGA1 DNA-binding affinity. In response to high glucose, triggers phosphorylation-mediated subnuclear localization shifting of PDX1. Involved in the regulation of eye size, lens formation and retinal lamination during late embryogenesis. This chain is Homeodomain-interacting protein kinase 2 (Hipk2), found in Mus musculus (Mouse).